The following is a 509-amino-acid chain: Maturase K (509 aa).

The protein belongs to the intron maturase 2 family. MatK subfamily.

Its subcellular location is the plastid. It localises to the chloroplast. In terms of biological role, usually encoded in the trnK tRNA gene intron. Probably assists in splicing its own and other chloroplast group II introns. The protein is Maturase K of Galbulimima belgraveana (Northern pigeonberry ash).